Reading from the N-terminus, the 684-residue chain is Sec1 family domain-containing protein 2 (684 aa).

The protein belongs to the STXBP/unc-18/SEC1 family.

May be involved in protein transport. This Mus musculus (Mouse) protein is Sec1 family domain-containing protein 2 (Scfd2).